An 84-amino-acid chain; its full sequence is Small ribosomal subunit protein uS17 (84 aa).

This sequence belongs to the universal ribosomal protein uS17 family. Part of the 30S ribosomal subunit.

One of the primary rRNA binding proteins, it binds specifically to the 5'-end of 16S ribosomal RNA. In Aliivibrio fischeri (strain ATCC 700601 / ES114) (Vibrio fischeri), this protein is Small ribosomal subunit protein uS17.